A 365-amino-acid chain; its full sequence is Phosphatidylcholine:ceramide cholinephosphotransferase 2 (365 aa).

The interval 9 to 50 (LEGHLESQTNNSTNTYTSPTEAVEEEDKNGKGKPKTLSNGLR) is disordered. Positions 15 to 28 (SQTNNSTNTYTSPT) are enriched in low complexity. Transmembrane regions (helical) follow at residues 80–100 (GIAF…ITVV), 128–148 (FSVS…QWLF), 159–179 (FFFI…VTTL), 219–239 (ILCG…TYLF), and 248–268 (FWWY…CILV). His229 is an active-site residue. Residues His272 and Asp276 contribute to the active site. A helical membrane pass occupies residues 273-290 (YTVDVIIAYYITTRLFWW). At 291–365 (YHSMANEKNL…KIGEDNEKST (75 aa)) the chain is on the cytoplasmic side. 4 S-palmitoyl cysteine lipidation sites follow: Cys331, Cys332, Cys343, and Cys348.

The protein belongs to the sphingomyelin synthase family. Post-translationally, palmitoylated on Cys-331, Cys-332, Cys-343 and Cys-348; which plays an important role in plasma membrane localization. In terms of tissue distribution, expression restricted to late round spermatids and elongating spermatids but not detected in late elongate spermatids and Sertoli cells (at protein level).

Its subcellular location is the cell membrane. The protein resides in the golgi apparatus membrane. It catalyses the reaction an N-acylsphing-4-enine + a 1,2-diacyl-sn-glycero-3-phosphocholine = a sphingomyelin + a 1,2-diacyl-sn-glycerol. The enzyme catalyses an N-acylsphinganine + a 1,2-diacyl-sn-glycero-3-phosphocholine = an N-acylsphinganine-1-phosphocholine + a 1,2-diacyl-sn-glycerol. The catalysed reaction is an N-acyl-(4R)-4-hydroxysphinganine + a 1,2-diacyl-sn-glycero-3-phosphocholine = an N-acyl-(4R)-4-hydroxysphinganine-phosphocholine + a 1,2-diacyl-sn-glycerol. It carries out the reaction an N-acylsphing-4-enine + a 1,2-diacyl-sn-glycero-3-phosphoethanolamine = an N-acylsphing-4-enine 1-phosphoethanolamine + a 1,2-diacyl-sn-glycerol. It catalyses the reaction an N-acylsphinganine + a 1,2-diacyl-sn-glycero-3-phosphoethanolamine = an N-acylsphinganine-1-phosphoethanolamine + a 1,2-diacyl-sn-glycerol. The enzyme catalyses an N-acyl-(4R)-4-hydroxysphinganine + a 1,2-diacyl-sn-glycero-3-phosphoethanolamine = an N-acyl-(4R)-4-hydroxysphinganine-1-phosphoethanolamine + a 1,2-diacyl-sn-glycerol. The catalysed reaction is 1,2-dihexadecanoyl-sn-glycero-3-phosphocholine + an N-acylsphing-4-enine = 1,2-dihexadecanoyl-sn-glycerol + a sphingomyelin. It carries out the reaction 1-(9Z-octadecenoyl)-2-acyl-sn-3-glycerol + a sphingomyelin = a 1-(9Z-octadecenoyl)-2-acyl-sn-glycero-3-phosphocholine + an N-acylsphing-4-enine. It catalyses the reaction N-hexadecanoylsphinganine + a 1,2-diacyl-sn-glycero-3-phosphocholine = N-hexadecanoyl-sphinganine-1-phosphocholine + a 1,2-diacyl-sn-glycerol. The enzyme catalyses N-hexadecanoyl-(4R)-hydroxysphinganine + a 1,2-diacyl-sn-glycero-3-phosphocholine = N-hexadecanoyl-(4R)-hydroxysphinganine-phosphocholine + a 1,2-diacyl-sn-glycerol. The catalysed reaction is N-hexadecanoylsphinganine + a 1,2-diacyl-sn-glycero-3-phosphoethanolamine = N-hexadecanoyl-sphinganine-1-phosphoethanolamine + a 1,2-diacyl-sn-glycerol. It carries out the reaction N-hexadecanoyl-(4R)-hydroxysphinganine + a 1,2-diacyl-sn-glycero-3-phosphoethanolamine = N-hexadecanoyl-(4R)-hydroxysphinganine-1-phosphoethanolamine + a 1,2-diacyl-sn-glycerol. It functions in the pathway sphingolipid metabolism. Sphingomyelin synthase that primarily contributes to sphingomyelin synthesis and homeostasis at the plasma membrane. Catalyzes the reversible transfer of phosphocholine moiety in sphingomyelin biosynthesis: in the forward reaction transfers phosphocholine head group of phosphatidylcholine (PC) on to ceramide (CER) to form ceramide phosphocholine (sphingomyelin, SM) and diacylglycerol (DAG) as by-product, and in the reverse reaction transfers phosphocholine from SM to DAG to form PC and CER. The direction of the reaction appears to depend on the levels of CER and DAG in the plasma membrane. Does not use free phosphorylcholine or CDP-choline as donors. Can also transfer phosphoethanolamine head group of phosphatidylethanolamine (PE) on to ceramide (CER) to form ceramide phosphoethanolamine (CPE). Regulates receptor-mediated signal transduction via mitogenic DAG and proapoptotic CER, as well as via SM, a structural component of membrane rafts that serve as platforms for signal transduction and protein sorting. To a lesser extent, plays a role in secretory transport via regulation of DAG pool at the Golgi apparatus and its downstream effects on PRKD1. Required for normal bone matrix mineralization. The sequence is that of Phosphatidylcholine:ceramide cholinephosphotransferase 2 (Sgms2) from Rattus norvegicus (Rat).